The sequence spans 365 residues: 3-dehydroquinate synthase (365 aa).

Residues 106–110 (GVIGD), 130–131 (TT), K142, K151, and 169–172 (FFAT) contribute to the NAD(+) site. Zn(2+) contacts are provided by E184, H247, and H264.

It belongs to the sugar phosphate cyclases superfamily. Dehydroquinate synthase family. Co(2+) is required as a cofactor. It depends on Zn(2+) as a cofactor. Requires NAD(+) as cofactor.

It localises to the cytoplasm. The catalysed reaction is 7-phospho-2-dehydro-3-deoxy-D-arabino-heptonate = 3-dehydroquinate + phosphate. It functions in the pathway metabolic intermediate biosynthesis; chorismate biosynthesis; chorismate from D-erythrose 4-phosphate and phosphoenolpyruvate: step 2/7. Functionally, catalyzes the conversion of 3-deoxy-D-arabino-heptulosonate 7-phosphate (DAHP) to dehydroquinate (DHQ). In Listeria welshimeri serovar 6b (strain ATCC 35897 / DSM 20650 / CCUG 15529 / CIP 8149 / NCTC 11857 / SLCC 5334 / V8), this protein is 3-dehydroquinate synthase.